The primary structure comprises 178 residues: MNAPADTTRLGYFLGPHGVQGGVKVYVLGDPQQLLALPRVWVEGQGWLRVRRTEALAPGAVLHLAGITSREAAEALRGLNVYAADADLPPLEEGSYYYHELRGLPVRDANGQPLGEVRDVWDSGHQDLLVVSHAGGEAFLPLQAPYVLVQTGESGRPQAIALTADAPAGLLGEGAEEA.

Positions 93–170 (EGSYYYHELR…ALTADAPAGL (78 aa)) constitute a PRC barrel domain.

It belongs to the RimM family. As to quaternary structure, binds ribosomal protein uS19.

The protein resides in the cytoplasm. Its function is as follows. An accessory protein needed during the final step in the assembly of 30S ribosomal subunit, possibly for assembly of the head region. Essential for efficient processing of 16S rRNA. May be needed both before and after RbfA during the maturation of 16S rRNA. It has affinity for free ribosomal 30S subunits but not for 70S ribosomes. The sequence is that of Ribosome maturation factor RimM from Deinococcus geothermalis (strain DSM 11300 / CIP 105573 / AG-3a).